The sequence spans 247 residues: TM2 domain-containing protein 3 (247 aa).

Residues 1–29 (MAGGVLPLRGLRALCRVLLFLSQFCILSG) form the signal peptide. At 30–179 (GEQSQALAQS…RTFPKMLYCN (150 aa)) the chain is on the extracellular side. N-linked (GlcNAc...) asparagine glycans are attached at residues N87, N122, N140, N157, N169, and N179. Residues 180–200 (WTGGYKWSTALALSITLGGFG) traverse the membrane as a helical segment. Positions 183–230 (GYKWSTALALSITLGGFGADRFYLGQWREGLGKLFSFGGLGIWTLIDV) constitute a TM2 domain. Over 201–215 (ADRFYLGQWREGLGK) the chain is Cytoplasmic. Residues 216-236 (LFSFGGLGIWTLIDVLLIGVG) form a helical membrane-spanning segment. Residues 237-247 (YVGPADGSLYI) lie on the Extracellular side of the membrane.

The protein belongs to the TM2 family. Widely expressed.

It is found in the membrane. Probable positive regulator of Notch signaling. This Homo sapiens (Human) protein is TM2 domain-containing protein 3 (TM2D3).